A 198-amino-acid chain; its full sequence is A-type ATP synthase subunit E (198 aa).

It belongs to the V-ATPase E subunit family. Has multiple subunits with at least A(3), B(3), C, D, E, F, H, I and proteolipid K(x).

It is found in the cell membrane. Its function is as follows. Component of the A-type ATP synthase that produces ATP from ADP in the presence of a proton gradient across the membrane. This chain is A-type ATP synthase subunit E, found in Pyrococcus horikoshii (strain ATCC 700860 / DSM 12428 / JCM 9974 / NBRC 100139 / OT-3).